We begin with the raw amino-acid sequence, 432 residues long: Metacaspase-1 (432 aa).

2 stretches are compositionally biased toward low complexity: residues 1–14 (MYPGSGRYTYNNAG) and 29–59 (QQYGQQYGQQYEQQYGQQYGQQNDQQFSQQY). The tract at residues 1–70 (MYPGSGRYTY…PPPGPPPMAY (70 aa)) is disordered. A compositionally biased stretch (pro residues) spans 60-70 (APPPGPPPMAY). Residues His-220 and Cys-276 contribute to the active site.

It belongs to the peptidase C14B family.

It is found in the cytoplasm. The protein localises to the nucleus. In terms of biological role, mediates cell death (apoptosis) triggered by oxygen stress, salt stress or chronological aging. Regulated cell death can prevent a release of toxic cellular components, thus avoiding necrotic collapse of the colony, and can also provide nutrients for healthy cells. Therefore, regulated cell death in yeast colonies can be as important for their development as are apoptosis and related processes that occur within metazoa. In Saccharomyces cerevisiae (strain YJM789) (Baker's yeast), this protein is Metacaspase-1 (MCA1).